The primary structure comprises 475 residues: Melanopsin (475 aa).

At M1–S21 the chain is on the extracellular side. Residues C22–Y42 form a helical membrane-spanning segment. The Cytoplasmic portion of the chain corresponds to S43–Y53. The chain crosses the membrane as a helical span at residues F54–F74. At L75–N90 the chain is on the extracellular side. C89 and C167 form a disulfide bridge. The chain crosses the membrane as a helical span at residues F91–S111. The Cytoplasmic portion of the chain corresponds to V112–C134. Residues I135–W155 traverse the membrane as a helical segment. Topologically, residues S156–C187 are extracellular. Residue N178 is glycosylated (N-linked (GlcNAc...) asparagine). Residues F188 to I208 form a helical membrane-spanning segment. At R209–K240 the chain is on the cytoplasmic side. The helical transmembrane segment at I241–L261 threads the bilayer. Residues I262–K276 lie on the Extracellular side of the membrane. The chain crosses the membrane as a helical span at residues S277–I297. N6-(retinylidene)lysine is present on K284. Residues H298–H475 are Cytoplasmic-facing. Disordered stretches follow at residues V370–E390 and P445–H475. Basic residues predominate over residues K375–S384. A compositionally biased stretch (polar residues) spans P445–E454. A compositionally biased stretch (acidic residues) spans E455–V464. The span at Q465–H475 shows a compositional bias: basic and acidic residues.

It belongs to the G-protein coupled receptor 1 family. Opsin subfamily. As to expression, highest level in the lateral eye. Low level in the brain.

It is found in the cell membrane. Its function is as follows. Photoreceptor implicated in non-image-forming responses to light. May be able to isomerize covalently bound all-trans retinal back to 11-cis retinal. The chain is Melanopsin (OPN4) from Podarcis siculus (Italian wall lizard).